The primary structure comprises 375 residues: MQKLQISVYIYLFVLILAGPVDLNENSEQKENVEKEGLCNACTWRQNTKSSRIEAIKIQILSKLRLETAPNISKDAIRQLLPKAPPLRELIDQYDVQRDDSSDGSLEDDDYHATTETIITMPTESDLLMQVEGKPKCCFFKFSSKIQYNKVVKAQLWIYLRPVKTPTTVFVQILRLIKPMKDGTRYTGIRSLKLDMNPGAGIWQSIDVKTVLQNWLKQPESNLGIEIKALDENGHDLAVTFPRPGEDGLNPFLEVKVTDTPKRSRRDFGLDCDEHSTESRCCRYPLTVDFEAFGWDWIIAPKRYKANYCSGECEFVFLQKYPHTHLVHQANPRGSAGPCCTPTKMSPINMLYFNGKEQIIYGKIPAMVVDRCGCS.

A signal peptide spans 1–18 (MQKLQISVYIYLFVLILA). A propeptide spanning residues 19–266 (GPVDLNENSE…VTDTPKRSRR (248 aa)) is cleaved from the precursor. The N-linked (GlcNAc...) asparagine glycan is linked to asparagine 71. Cystine bridges form between cysteine 272/cysteine 282, cysteine 281/cysteine 340, cysteine 309/cysteine 372, and cysteine 313/cysteine 374.

It belongs to the TGF-beta family. As to quaternary structure, homodimer; disulfide-linked. Interacts with WFIKKN2, leading to inhibit its activity. Interacts with FSTL3. In terms of processing, synthesized as large precursor molecule that undergoes proteolytic cleavage to generate an N-terminal propeptide and a disulfide linked C-terminal dimer, which is the biologically active molecule. The circulating form consists of a latent complex of the C-terminal dimer and other proteins, including its propeptide, which maintain the C-terminal dimer in a latent, inactive state. Ligand activation requires additional cleavage of the prodomain by a tolloid-like metalloproteinase.

The protein localises to the secreted. Functionally, acts specifically as a negative regulator of skeletal muscle growth. The protein is Growth/differentiation factor 8 (MSTN) of Equus caballus (Horse).